A 575-amino-acid chain; its full sequence is SH2B adapter protein 3 (575 aa).

3 disordered regions span residues 1-23, 83-136, and 150-176; these read MNGP…AAAP, RAPG…CSFQ, and SAGE…PARP. Residue serine 13 is modified to Phosphoserine. Residues 83–93 are compositionally biased toward basic and acidic residues; it reads RAPGRDYRDTG. A compositionally biased stretch (low complexity) spans 95-104; that stretch reads GPPAKAEASP. Phosphoserine occurs at positions 103, 120, and 150. Residues 152-174 show a composition bias toward low complexity; sequence GELPAAHTAAAPGTPGEAAETPA. The PH domain maps to 194-307; that stretch reads EALKEAVLRY…WMAELSECTG (114 aa). The interval 322 to 346 is disordered; that stretch reads ALEPSTSSSPRGSTDSLNQGASPGG. The segment covering 325 to 337 has biased composition (low complexity); it reads PSTSSSPRGSTDS. Serine 330 is subject to Phosphoserine. An SH2 domain is found at 364–462; that stretch reads WFHGPISRVK…ACDVRLSSYV (99 aa). 2 disordered regions span residues 503-525 and 546-575; these read SSGC…PEQI and PVNR…YTPL.

Belongs to the SH2B adapter family. In terms of assembly, binds to the tyrosine-phosphorylated TCR zeta chain via its SH2 domain. Tyrosine phosphorylated by LCK. Preferentially expressed by lymphoid cell lines.

In terms of biological role, links T-cell receptor activation signal to phospholipase C-gamma-1, GRB2 and phosphatidylinositol 3-kinase. This chain is SH2B adapter protein 3 (SH2B3), found in Homo sapiens (Human).